A 60-amino-acid polypeptide reads, in one-letter code: Large ribosomal subunit protein bL32 (60 aa).

Residues 1-23 (MAVPRNRHSNARKNIRRSHHAKK) are disordered.

It belongs to the bacterial ribosomal protein bL32 family.

The protein is Large ribosomal subunit protein bL32 of Chlamydia caviae (strain ATCC VR-813 / DSM 19441 / 03DC25 / GPIC) (Chlamydophila caviae).